The following is a 1224-amino-acid chain: Probable serine/threonine-protein kinase DDB_G0292350 (1224 aa).

2 disordered regions span residues 57 to 98 and 252 to 284; these read MSGS…STQR and SSPSSSSSSIKTKNTTSTTTTTTTTKNLNDISN. Low complexity-rich tracts occupy residues 58–74 and 83–95; these read SGSIQSDLSSSDNFTSS and SSSNTSNRNSDNS. Coiled coils occupy residues 352 to 381 and 540 to 569; these read LFKQQEKQHQQQQQQQQNQQDKEKFEKQNN and DVQLSTKLNDEEETIEKEEEDLNSVDEYLT. 2 disordered regions span residues 693–784 and 815–836; these read QPIP…FVIT and FTNNNNNNNGGSTITTTTTNNI. Positions 743–768 are enriched in low complexity; the sequence is NNNNNNNNNINNNNINNNNINNNKNG. Residues 772–784 show a composition bias toward polar residues; sequence GETPSPSSSFVIT. Residues 935–1193 form the Protein kinase domain; sequence FRDKIKLGTG…PEMLLHHTFL (259 aa). Residues 941 to 949 and Lys964 each bind ATP; that span reads LGTGAFGNV. The Proton acceptor role is filled by Asp1063.

The protein belongs to the protein kinase superfamily. Ser/Thr protein kinase family. Mg(2+) serves as cofactor.

The catalysed reaction is L-seryl-[protein] + ATP = O-phospho-L-seryl-[protein] + ADP + H(+). The enzyme catalyses L-threonyl-[protein] + ATP = O-phospho-L-threonyl-[protein] + ADP + H(+). This is Probable serine/threonine-protein kinase DDB_G0292350 from Dictyostelium discoideum (Social amoeba).